A 458-amino-acid polypeptide reads, in one-letter code: tRNA modification GTPase MnmE (458 aa).

(6S)-5-formyl-5,6,7,8-tetrahydrofolate-binding residues include R22, E84, and R123. In terms of domain architecture, TrmE-type G spans 220-379; that stretch reads GIATAIIGRP…LEKAIADLFF (160 aa). N230 provides a ligand contact to K(+). Residues 230–235, 249–255, and 274–277 contribute to the GTP site; these read NVGKSS, TDIAGTT, and DTAG. S234 provides a ligand contact to Mg(2+). The K(+) site is built by T249, I251, and T254. A Mg(2+)-binding site is contributed by T255. K458 contributes to the (6S)-5-formyl-5,6,7,8-tetrahydrofolate binding site.

It belongs to the TRAFAC class TrmE-Era-EngA-EngB-Septin-like GTPase superfamily. TrmE GTPase family. As to quaternary structure, homodimer. Heterotetramer of two MnmE and two MnmG subunits. Requires K(+) as cofactor.

It is found in the cytoplasm. Functionally, exhibits a very high intrinsic GTPase hydrolysis rate. Involved in the addition of a carboxymethylaminomethyl (cmnm) group at the wobble position (U34) of certain tRNAs, forming tRNA-cmnm(5)s(2)U34. The protein is tRNA modification GTPase MnmE of Bacillus thuringiensis (strain Al Hakam).